The following is a 147-amino-acid chain: Large ribosomal subunit protein bL9 (147 aa).

Belongs to the bacterial ribosomal protein bL9 family.

Its function is as follows. Binds to the 23S rRNA. In Halothermothrix orenii (strain H 168 / OCM 544 / DSM 9562), this protein is Large ribosomal subunit protein bL9.